The chain runs to 170 residues: MNPMNEVQISKATVSIGVGEAGEKLSRAITLLEQMFDQTPVKTFSKVTNPEFGIRKRQPIACKLTLRGEKADKAIEMVLEGINKNIKPTQFDAQGNLSFGIKEHIDIPGMKYNPDIGIFGMNVSVTFEKPGYRIAKRRIQQKKVPAKHRISKEETMKYMEDNFNVNYVTE.

This sequence belongs to the universal ribosomal protein uL5 family. In terms of assembly, part of the 50S ribosomal subunit; contacts the 5S rRNA and probably tRNA. Forms a bridge to the 30S subunit in the 70S ribosome.

Functionally, this is one of the proteins that bind and probably mediate the attachment of the 5S RNA into the large ribosomal subunit, where it forms part of the central protuberance. In the 70S ribosome it contacts protein S13 of the 30S subunit (bridge B1b), connecting the 2 subunits; this bridge is implicated in subunit movement. May contact the P site tRNA; the 5S rRNA and some of its associated proteins might help stabilize positioning of ribosome-bound tRNAs. The polypeptide is Large ribosomal subunit protein uL5 (Methanobrevibacter smithii (strain ATCC 35061 / DSM 861 / OCM 144 / PS)).